A 188-amino-acid chain; its full sequence is Elongation factor P (188 aa).

The protein belongs to the elongation factor P family.

It is found in the cytoplasm. Its pathway is protein biosynthesis; polypeptide chain elongation. Its function is as follows. Involved in peptide bond synthesis. Stimulates efficient translation and peptide-bond synthesis on native or reconstituted 70S ribosomes in vitro. Probably functions indirectly by altering the affinity of the ribosome for aminoacyl-tRNA, thus increasing their reactivity as acceptors for peptidyl transferase. This is Elongation factor P from Azotobacter vinelandii (strain DJ / ATCC BAA-1303).